Reading from the N-terminus, the 118-residue chain is UPF0102 protein Arth_2474 (118 aa).

Belongs to the UPF0102 family.

This chain is UPF0102 protein Arth_2474, found in Arthrobacter sp. (strain FB24).